We begin with the raw amino-acid sequence, 539 residues long: DnaJ homolog subfamily C member 7 homolog (539 aa).

6 TPR repeats span residues 3-36 (HEEC…SNGT), 75-108 (IKGY…DPRN), 189-222 (PEYL…DPDY), 235-268 (IESK…DPKL), 273-306 (SQLY…DPNY), and 307-340 (GKAY…DPEN). The region spanning 361–431 (DYYKILGVSK…KKKRQYDMGQ (71 aa)) is the J domain. Positions 512 to 539 (MGGGFGGHSGHSHGGSRSRSSRGGNEYR) are disordered. A compositionally biased stretch (basic residues) spans 521 to 531 (GHSHGGSRSRS).

In Dictyostelium discoideum (Social amoeba), this protein is DnaJ homolog subfamily C member 7 homolog (dnajc7).